The primary structure comprises 181 residues: High mobility group protein B4 (181 aa).

The HMG box 1 DNA-binding region spans 9 to 79 (PKVNVSSYIH…RYQQEMMNYI (71 aa)). Positions 80 to 89 (GKRRKRRKRD) are enriched in basic residues. A disordered region spans residues 80 to 100 (GKRRKRRKRDPKAPRKPPSSF). Residues 93–161 (PRKPPSSFLL…KYFEEQEAYR (69 aa)) constitute a DNA-binding region (HMG box 2).

Belongs to the HMGB family. As to expression, expressed in adult germ cells (at protein level).

The protein resides in the nucleus. It is found in the chromosome. This Mus musculus (Mouse) protein is High mobility group protein B4 (Hmgb4).